Here is an 89-residue protein sequence, read N- to C-terminus: Small ribosomal subunit protein uS15 (89 aa).

Belongs to the universal ribosomal protein uS15 family. Part of the 30S ribosomal subunit. Forms a bridge to the 50S subunit in the 70S ribosome, contacting the 23S rRNA.

Its function is as follows. One of the primary rRNA binding proteins, it binds directly to 16S rRNA where it helps nucleate assembly of the platform of the 30S subunit by binding and bridging several RNA helices of the 16S rRNA. Functionally, forms an intersubunit bridge (bridge B4) with the 23S rRNA of the 50S subunit in the ribosome. This chain is Small ribosomal subunit protein uS15, found in Streptococcus gordonii (strain Challis / ATCC 35105 / BCRC 15272 / CH1 / DL1 / V288).